The chain runs to 432 residues: Amino-acid acetyltransferase (432 aa).

An N-acetyltransferase domain is found at 286–425 (EQLREAGIED…ASLYNFQRNS (140 aa)).

Belongs to the acetyltransferase family. ArgA subfamily.

The protein localises to the cytoplasm. The enzyme catalyses L-glutamate + acetyl-CoA = N-acetyl-L-glutamate + CoA + H(+). The protein operates within amino-acid biosynthesis; L-arginine biosynthesis; N(2)-acetyl-L-ornithine from L-glutamate: step 1/4. The protein is Amino-acid acetyltransferase of Pseudomonas paraeruginosa (strain DSM 24068 / PA7) (Pseudomonas aeruginosa (strain PA7)).